A 244-amino-acid polypeptide reads, in one-letter code: L-xylulose reductase (244 aa).

At Met-1 the chain carries N-acetylmethionine. 11 to 40 (LVTGAGKGIGRGTVQALHATGARVVAVSRT) is an NADP(+) binding site. Arg-21 bears the Omega-N-methylarginine mark. At Ser-46 the chain carries Phosphoserine. Ser-136 provides a ligand contact to substrate. Catalysis depends on Tyr-149, which acts as the Proton acceptor. Lys-153 contacts NADP(+).

This sequence belongs to the short-chain dehydrogenases/reductases (SDR) family. In terms of assembly, homotetramer. Highly expressed in kidney, liver and epididymis. In the epididymis, it is mainly expressed in the proximal and distal sections of the corpus region. Weakly or not expressed in brain, lung, heart, spleen and testis.

It localises to the membrane. It catalyses the reaction xylitol + NADP(+) = L-xylulose + NADPH + H(+). Catalyzes the NADPH-dependent reduction of several pentoses, tetroses, trioses, alpha-dicarbonyl compounds and L-xylulose. Participates in the uronate cycle of glucose metabolism. May play a role in the water absorption and cellular osmoregulation in the proximal renal tubules by producing xylitol, an osmolyte, thereby preventing osmolytic stress from occurring in the renal tubules. This is L-xylulose reductase (DCXR) from Homo sapiens (Human).